We begin with the raw amino-acid sequence, 67 residues long: Large ribosomal subunit protein uL29 (67 aa).

It belongs to the universal ribosomal protein uL29 family.

This chain is Large ribosomal subunit protein uL29, found in Alkaliphilus metalliredigens (strain QYMF).